The sequence spans 1396 residues: Helicase ARIP4 (1396 aa).

Residues 1 to 103 (MSDASISGSE…LQKPANLRRN (103 aa)) are disordered. A compositionally biased stretch (acidic residues) spans 11–49 (PELDPEDMEEEEEDDEDDDEEEEEEEDEEDNDGDDEDDK). The segment covering 75 to 84 (RSTTSGQSGQ) has biased composition (polar residues). The Helicase ATP-binding domain occupies 290-510 (RFSGSSGFGC…WCMVDFVRPD (221 aa)). Position 303–310 (303–310 (HSMGLGKT)) interacts with ATP. The DEAH box motif lies at 461 to 464 (DEGH). The LXXLL motif 1 motif lies at 549–553 (LHSLL). One can recognise a Helicase C-terminal domain in the interval 717–891 (KMVLLFHLIE…RVVDDLNPEV (175 aa)). Disordered regions lie at residues 1117 to 1168 (SGKQ…PDSP) and 1194 to 1250 (NLGL…STMN). Polar residues-rich tracts occupy residues 1128 to 1148 (QATSGAQGSSAPYLSNGRHST) and 1218 to 1238 (DQSSHWPSNKRNPYSQLSYPN). The short motif at 1273-1277 (LPSLL) is the LXXLL motif 2 element. The tract at residues 1340–1396 (GLPTNNPASTFPGYLSSHSNYQASPGTSSRPLPSGETELGSCEEDGRDDDVVEVTGE) is disordered. Over residues 1355-1370 (SSHSNYQASPGTSSRP) the composition is skewed to polar residues. Residues 1380–1396 (SCEEDGRDDDVVEVTGE) are compositionally biased toward acidic residues.

It belongs to the SNF2/RAD54 helicase family.

Its subcellular location is the nucleus. It carries out the reaction ATP + H2O = ADP + phosphate + H(+). Functionally, DNA helicase that modulates androgen receptor (AR)-dependent transactivation in a promoter-dependent manner. The chain is Helicase ARIP4 (rad54l2) from Xenopus tropicalis (Western clawed frog).